The chain runs to 473 residues: Aspartyl/glutamyl-tRNA(Asn/Gln) amidotransferase subunit B (473 aa).

The protein belongs to the GatB/GatE family. GatB subfamily. Heterotrimer of A, B and C subunits.

It carries out the reaction L-glutamyl-tRNA(Gln) + L-glutamine + ATP + H2O = L-glutaminyl-tRNA(Gln) + L-glutamate + ADP + phosphate + H(+). The enzyme catalyses L-aspartyl-tRNA(Asn) + L-glutamine + ATP + H2O = L-asparaginyl-tRNA(Asn) + L-glutamate + ADP + phosphate + 2 H(+). In terms of biological role, allows the formation of correctly charged Asn-tRNA(Asn) or Gln-tRNA(Gln) through the transamidation of misacylated Asp-tRNA(Asn) or Glu-tRNA(Gln) in organisms which lack either or both of asparaginyl-tRNA or glutaminyl-tRNA synthetases. The reaction takes place in the presence of glutamine and ATP through an activated phospho-Asp-tRNA(Asn) or phospho-Glu-tRNA(Gln). The sequence is that of Aspartyl/glutamyl-tRNA(Asn/Gln) amidotransferase subunit B from Sulfurisphaera tokodaii (strain DSM 16993 / JCM 10545 / NBRC 100140 / 7) (Sulfolobus tokodaii).